Here is a 605-residue protein sequence, read N- to C-terminus: UPF0313 protein GSU2873 (605 aa).

The Radical SAM core domain occupies 291 to 561; sequence AYEQIRASVT…LQKALLLWHL (271 aa). Residues Cys-305, Cys-309, and Cys-312 each contribute to the [4Fe-4S] cluster site. The tract at residues 586–605 is disordered; the sequence is GGAAGGGGGRSGSGFRPGRT. A compositionally biased stretch (gly residues) spans 587-597; it reads GAAGGGGGRSG.

The protein belongs to the UPF0313 family. [4Fe-4S] cluster serves as cofactor.

The sequence is that of UPF0313 protein GSU2873 from Geobacter sulfurreducens (strain ATCC 51573 / DSM 12127 / PCA).